The following is a 282-amino-acid chain: tRNA (guanine-N(1)-)-methyltransferase (282 aa).

Isoleucine 145–leucine 150 provides a ligand contact to S-adenosyl-L-methionine.

Belongs to the RNA methyltransferase TrmD family. As to quaternary structure, homodimer.

The protein localises to the cytoplasm. The catalysed reaction is guanosine(37) in tRNA + S-adenosyl-L-methionine = N(1)-methylguanosine(37) in tRNA + S-adenosyl-L-homocysteine + H(+). Specifically methylates guanosine-37 in various tRNAs. The polypeptide is tRNA (guanine-N(1)-)-methyltransferase (Streptomyces avermitilis (strain ATCC 31267 / DSM 46492 / JCM 5070 / NBRC 14893 / NCIMB 12804 / NRRL 8165 / MA-4680)).